We begin with the raw amino-acid sequence, 418 residues long: Putative ion-transport protein YfeO (418 aa).

Helical transmembrane passes span 10–30 (LLLS…LIVV), 54–74 (DSPL…GLVI), 99–119 (ALPG…SLGP), 120–140 (EHPI…RLLP), 149–169 (ILAS…AALI), 186–206 (LFAP…FFHP), 223–243 (ILSG…AVWC), 258–278 (VLVL…GGPV), 300–320 (DYFL…ASGF), 322–342 (GGRI…LHEH), 343–363 (VPAV…VLVV), and 371–391 (LFMA…CIVM).

This sequence belongs to the chloride channel (TC 2.A.49) family.

It localises to the cell membrane. The protein is Putative ion-transport protein YfeO of Escherichia coli O9:H4 (strain HS).